Reading from the N-terminus, the 448-residue chain is Tubulin alpha-4A chain (448 aa).

An MREC motif motif is present at residues 1 to 4 (MREC). Glutamine 11 lines the GTP pocket. Residue lysine 40 is modified to N6-acetyllysine. Serine 48 carries the post-translational modification Phosphoserine. Glutamate 71 contributes to the GTP binding site. A Mg(2+)-binding site is contributed by glutamate 71. Tyrosine 83 is subject to 3'-nitrotyrosine. Residues serine 140, glycine 144, threonine 145, threonine 179, asparagine 206, and asparagine 228 each coordinate GTP. Glutamate 254 is an active-site residue. The residue at position 432 (tyrosine 432) is a Phosphotyrosine. Residue serine 439 is modified to Phosphoserine.

Belongs to the tubulin family. As to quaternary structure, dimer of alpha and beta chains. A typical microtubule is a hollow water-filled tube with an outer diameter of 25 nm and an inner diameter of 15 nM. Alpha-beta heterodimers associate head-to-tail to form protofilaments running lengthwise along the microtubule wall with the beta-tubulin subunit facing the microtubule plus end conferring a structural polarity. Microtubules usually have 13 protofilaments but different protofilament numbers can be found in some organisms and specialized cells. Interacts with CFAP157. The cofactor is Mg(2+). Some glutamate residues at the C-terminus are polyglycylated, resulting in polyglycine chains on the gamma-carboxyl group. Glycylation is mainly limited to tubulin incorporated into axonemes (cilia and flagella) whereas glutamylation is prevalent in neuronal cells, centrioles, axonemes, and the mitotic spindle. Both modifications can coexist on the same protein on adjacent residues, and lowering polyglycylation levels increases polyglutamylation, and reciprocally. Cilia and flagella glycylation is required for their stability and maintenance. Flagella glycylation controls sperm motility. In terms of processing, some glutamate residues at the C-terminus are polyglutamylated, resulting in polyglutamate chains on the gamma-carboxyl group. Polyglutamylation plays a key role in microtubule severing by spastin (SPAST). SPAST preferentially recognizes and acts on microtubules decorated with short polyglutamate tails: severing activity by SPAST increases as the number of glutamates per tubulin rises from one to eight, but decreases beyond this glutamylation threshold. Glutamylation is also involved in cilia motility. Post-translationally, acetylation of alpha chains at Lys-40 is located inside the microtubule lumen. This modification has been correlated with increased microtubule stability, intracellular transport and ciliary assembly. Methylation of alpha chains at Lys-40 is found in mitotic microtubules and is required for normal mitosis and cytokinesis contributing to genomic stability. In terms of processing, although this tubulin does not encode a C-terminal tyrosine, a C-terminal tyrosine can be added post-translationally by the tubulin tyrosine ligase (TTL). It can then undergo a detyrosination cycle by the tubulin tyrosine carboxypeptidase (MATCAP1/KIAA0895L).

It localises to the cytoplasm. The protein localises to the cytoskeleton. It catalyses the reaction GTP + H2O = GDP + phosphate + H(+). Tubulin is the major constituent of microtubules, a cylinder consisting of laterally associated linear protofilaments composed of alpha- and beta-tubulin heterodimers. Microtubules grow by the addition of GTP-tubulin dimers to the microtubule end, where a stabilizing cap forms. Below the cap, tubulin dimers are in GDP-bound state, owing to GTPase activity of alpha-tubulin. The polypeptide is Tubulin alpha-4A chain (TUBA4A) (Macaca fascicularis (Crab-eating macaque)).